A 139-amino-acid chain; its full sequence is MAKFLIVEARFYDHLNDMLVAGAKAALKEAGHEVEVITVPGALEIPGAIALADQSEDYDGYVAIGVVIRGETYHFEIVAGESARGIMALTMDGVAIGNGILTVENEAQALVRADPKQKDKGGEAAKAALALLALRERWS.

Residues Phe11, 42 to 44, and 66 to 68 each bind 5-amino-6-(D-ribitylamino)uracil; these read ALE and VVI. A (2S)-2-hydroxy-3-oxobutyl phosphate-binding site is contributed by 71 to 72; it reads ET. His74 functions as the Proton donor in the catalytic mechanism. Asn98 provides a ligand contact to 5-amino-6-(D-ribitylamino)uracil. (2S)-2-hydroxy-3-oxobutyl phosphate is bound at residue Arg112.

Belongs to the DMRL synthase family.

It carries out the reaction (2S)-2-hydroxy-3-oxobutyl phosphate + 5-amino-6-(D-ribitylamino)uracil = 6,7-dimethyl-8-(1-D-ribityl)lumazine + phosphate + 2 H2O + H(+). Its pathway is cofactor biosynthesis; riboflavin biosynthesis; riboflavin from 2-hydroxy-3-oxobutyl phosphate and 5-amino-6-(D-ribitylamino)uracil: step 1/2. Its function is as follows. Catalyzes the formation of 6,7-dimethyl-8-ribityllumazine by condensation of 5-amino-6-(D-ribitylamino)uracil with 3,4-dihydroxy-2-butanone 4-phosphate. This is the penultimate step in the biosynthesis of riboflavin. This Novosphingobium aromaticivorans (strain ATCC 700278 / DSM 12444 / CCUG 56034 / CIP 105152 / NBRC 16084 / F199) protein is 6,7-dimethyl-8-ribityllumazine synthase.